Consider the following 497-residue polypeptide: Aldehyde dehydrogenase (497 aa).

242–247 serves as a coordination point for NAD(+); the sequence is GSTLVG. The active-site Proton acceptor is the Glu265. Residue Cys299 is the Nucleophile of the active site.

It belongs to the aldehyde dehydrogenase family.

The enzyme catalyses an aldehyde + NAD(+) + H2O = a carboxylate + NADH + 2 H(+). It participates in alcohol metabolism; ethanol degradation; acetate from ethanol: step 2/2. The protein is Aldehyde dehydrogenase (aldA) of Aspergillus niger.